Here is a 1008-residue protein sequence, read N- to C-terminus: DNA polymerase (1008 aa).

This sequence belongs to the DNA polymerase type-B family. In terms of assembly, interacts with A20. Component of the Uracil-DNA glycosylase(UDG)-A20-polymerase complex; A20 and UDG form a heterodimeric processivity factor that associates with E9 to form the processive polymerase holoenzyme.

It carries out the reaction DNA(n) + a 2'-deoxyribonucleoside 5'-triphosphate = DNA(n+1) + diphosphate. Its function is as follows. Catalyzes DNA synthesis. Acquires processivity by associating with a heterodimeric processivity factor comprised of the viral A20 and D4 proteins, thereby forming the DNA polymerase holoenzyme. Displays 3'- to 5' exonuclease activity. Might participate in viral DNA recombination. Does not perform translesion synthesis across an abasic site. The sequence is that of DNA polymerase (POL) from Capra hircus (Goat).